The sequence spans 834 residues: DNA-directed RNA polymerase subunit beta' (834 aa).

Zn(2+) is bound by residues C88, C90, C104, and C107. 3 residues coordinate Mg(2+): D641, D643, and D645.

This sequence belongs to the RNA polymerase beta' chain family. RpoC1 subfamily. In plastids the minimal PEP RNA polymerase catalytic core is composed of four subunits: alpha, beta, beta', and beta''. When a (nuclear-encoded) sigma factor is associated with the core the holoenzyme is formed, which can initiate transcription. Mg(2+) serves as cofactor. It depends on Zn(2+) as a cofactor.

It localises to the plastid. It catalyses the reaction RNA(n) + a ribonucleoside 5'-triphosphate = RNA(n+1) + diphosphate. In terms of biological role, DNA-dependent RNA polymerase catalyzes the transcription of DNA into RNA using the four ribonucleoside triphosphates as substrates. This Helicosporidium sp. subsp. Simulium jonesii (Green alga) protein is DNA-directed RNA polymerase subunit beta' (rpoC1).